We begin with the raw amino-acid sequence, 456 residues long: High mobility group B protein 6 (456 aa).

Disordered regions lie at residues 1 to 42, 117 to 142, 238 to 258, and 349 to 389; these read MATN…KSAK, SSLT…KRPS, AEQD…PKHP, and MLKK…YFLF. The span at 11 to 21 shows a compositional bias: basic residues; it reads KKPRNSRKALK. Positions 138–206 form a DNA-binding region, HMG box 1; sequence TKRPSSSYVL…AYLQVIAKEK (69 aa). Over residues 240–254 the composition is skewed to basic and acidic residues; the sequence is QDNKKKNKKEKDPLK. The segment at residues 255 to 321 is a DNA-binding region (HMG box 2); it reads PKHPVSAFLV…TYLQAMEEYK (67 aa). The segment covering 354 to 363 has biased composition (basic and acidic residues); it reads EKTDNLIKKE. The HMG box 3 DNA-binding region spans 379 to 447; that stretch reads PKKPASSYFL…AYKKEVEAYN (69 aa).

It localises to the nucleus. This Arabidopsis thaliana (Mouse-ear cress) protein is High mobility group B protein 6 (HMGB6).